We begin with the raw amino-acid sequence, 400 residues long: Cysteine desulfurase (400 aa).

Residues glycine 71–threonine 72, asparagine 150, glutamine 178, and serine 198–histidine 200 each bind pyridoxal 5'-phosphate. Residue lysine 201 is modified to N6-(pyridoxal phosphate)lysine. Pyridoxal 5'-phosphate is bound at residue threonine 236. The Cysteine persulfide intermediate role is filled by cysteine 324. Cysteine 324 lines the [2Fe-2S] cluster pocket.

The protein belongs to the class-V pyridoxal-phosphate-dependent aminotransferase family. NifS/IscS subfamily. Homodimer. Pyridoxal 5'-phosphate is required as a cofactor.

The enzyme catalyses (sulfur carrier)-H + L-cysteine = (sulfur carrier)-SH + L-alanine. Its function is as follows. Catalyzes the removal of elemental sulfur atoms from cysteine to produce alanine. Seems to participate in the biosynthesis of the nitrogenase metalloclusters by providing the inorganic sulfur required for the Fe-S core formation. In Nostoc sp. (strain PCC 7120 / SAG 25.82 / UTEX 2576), this protein is Cysteine desulfurase.